We begin with the raw amino-acid sequence, 275 residues long: Large ribosomal subunit protein uL2c (275 aa).

2 disordered regions span residues 29–60 (PEKS…GHKR) and 225–252 (MNPV…PWGH). The segment covering 51 to 60 (SRHRGGGHKR) has biased composition (basic residues).

The protein belongs to the universal ribosomal protein uL2 family. In terms of assembly, part of the 50S ribosomal subunit.

Its subcellular location is the plastid. The protein localises to the chloroplast. The chain is Large ribosomal subunit protein uL2c (rpl2) from Chlorokybus atmophyticus (Soil alga).